The primary structure comprises 265 residues: Deoxycytidine kinase 2 (265 aa).

31-39 lines the ATP pocket; it reads GNIAAGKST. 3 residues coordinate substrate: E56, Y89, and Q100. Residue E130 is the Proton acceptor of the active site. Residues R131 and D136 each contribute to the substrate site. 191-195 is an ATP binding site; sequence RLQKR. Substrate is bound at residue E200. 243–245 lines the ATP pocket; the sequence is EDF.

Belongs to the DCK/DGK family. As to quaternary structure, homodimer. As to expression, expressed at high levels in adult intestine, spleen, thymus and testis with lower levels in skeletal muscle and eye. In the embryo, expressed at higher levels until day 10 with lower levels in later stages.

It localises to the nucleus. The enzyme catalyses 2'-deoxycytidine + a ribonucleoside 5'-triphosphate = dCMP + a ribonucleoside 5'-diphosphate + H(+). It carries out the reaction 2'-deoxyguanosine + ATP = dGMP + ADP + H(+). The catalysed reaction is 2'-deoxyadenosine + ATP = dAMP + ADP + H(+). Phosphorylates the deoxyribonucleosides deoxyadenosine, deoxycytidine and deoxyguanosine. Shows highest activity against deoxyguanosine followed by deoxycytidine and then deoxyadenosine. Shows only very minor activity against deoxyuridine and deoxythymidine. The chain is Deoxycytidine kinase 2 from Gallus gallus (Chicken).